A 109-amino-acid polypeptide reads, in one-letter code: Large ribosomal subunit protein bL31B (109 aa).

Residues 79 to 109 (NVRQPAQQPQPEEDALPAAKGKKKVVTKKKK) form a disordered region. Residues 98–109 (KGKKKVVTKKKK) are compositionally biased toward basic residues.

This sequence belongs to the bacterial ribosomal protein bL31 family. Type B subfamily. As to quaternary structure, part of the 50S ribosomal subunit.

The protein is Large ribosomal subunit protein bL31B of Chlamydia pneumoniae (Chlamydophila pneumoniae).